A 944-amino-acid polypeptide reads, in one-letter code: MDEASHLPNGSLKNMEFTPVGFIKSKRNTTQTQVVSPTKVPNANNGDENEGPVKKRQRRSIDDTIDSTRLFSEASQFDDSFPEIKANIPPSPRSGNVDKSRKRNLIDDLKKDVPMSQPLKEQEVREHQMKKERFDRALESKLLGKRHITYANSDISNKELYINEIKSLKHEIKELRKEKNDTLNNYDTLEEETDDLKNRLQALEKELDAKNKIVNSRKVDDHSGCIEEREQMERKLAELERKLKTVKDQVLELENNSDVQSLKLRSKEDELKNLMNELNELKSNAEEKDTQLEFKKNELRKRTNELNELKIKSDEMDLQLKQKQNESKRLKDELNELETKFSENGSQSSAKENELKMLKNKIAELEEEISTKNSQLIAKEGKLASLMAHLTQLESKLNQRDSQLGSREEELKKTNDKLQKDIRIAREETVSKDERITDLQKKVKQLENDLFVIKKTHSESKTITDNELESKDKLIKILENDLKVAQEKYSKMEKELKEREFNYKISESKLEDEKTTLNEKISNLAAENSQLKNKIEDNSTATHHMKENYEKQLESLRKDIEEYKESAKDSEDKIEELKIRIAENSAKVSEKRSKDIKQKDEQISDLTQNLKLQEDEISSLKSIIDRYKKDFNQLKSEQSNIQHDLNLQILNLENKLIESEDELKSLRDSQKIEIENWKRKYNNLSLENDRLLTEKESASDKEREISILNRKLDEMDKEKWNLQESKEKYKRELQKVITANDRLRREKEELNENSNNIRIMEDKMTRIKKNYLSEITSLQEENRRLEERLILNERRKDNDSTMQLNDIISYYKLKYHSEVRHNNDLKVINDYLNKVLALGTRRLRLDTRKGEHSLNISLPDDDELDRDYYNSHVYTRYHDYEYPLRFNLNRRGPYFERRLSFKTVALLVLACVRMKRIAFYRRSDDNRLRILRDRIESSSGRISW.

At threonine 18 the chain carries Phosphothreonine. Residues 23-110 form a disordered region; the sequence is IKSKRNTTQT…RKRNLIDDLK (88 aa). The segment covering 28-46 has biased composition (polar residues); that stretch reads NTTQTQVVSPTKVPNANNG. Positions 54-59 match the Nuclear localization signal motif; sequence KKRQRR. A Phosphoserine; by MPS1 modification is found at serine 60. Phosphothreonine; by MPS1 occurs at positions 64 and 68. Residues 67 to 78 are compositionally biased toward polar residues; sequence STRLFSEASQFD. Serine 80 carries the post-translational modification Phosphoserine. The segment covering 96–110 has biased composition (basic and acidic residues); that stretch reads NVDKSRKRNLIDDLK. Residues 119-799 adopt a coiled-coil conformation; it reads LKEQEVREHQ…ILNERRKDND (681 aa). Residue serine 529 is modified to Phosphoserine. 2 short sequence motifs (nuclear localization signal) span residues 726–731 and 742–747; these read KEKYKR and RLRREK. The segment at 900-927 is calmodulin-binding; that stretch reads SFKTVALLVLACVRMKRIAFYRRSDDNR.

The protein belongs to the SPC110 family. Homodimer. Component of the SPC110 complex containing at least CMD1, SPC29 and SCP110. Interacts with SPC97 and SPC98.

Its subcellular location is the nucleus. It is found in the cytoplasm. The protein resides in the cytoskeleton. The protein localises to the microtubule organizing center. It localises to the spindle pole body. Functionally, component of the spindle pole body (SPB) required for the proper execution of spindle pole body (SPB) duplication. Potential role in cross-linking filaments or anchoring other molecules. It is essential for growth. The polypeptide is Spindle pole body component 110 (SPC110) (Saccharomyces cerevisiae (strain YJM789) (Baker's yeast)).